The sequence spans 465 residues: Uronate isomerase (465 aa).

This sequence belongs to the metallo-dependent hydrolases superfamily. Uronate isomerase family.

It carries out the reaction D-glucuronate = D-fructuronate. It catalyses the reaction aldehydo-D-galacturonate = keto-D-tagaturonate. It participates in carbohydrate metabolism; pentose and glucuronate interconversion. This is Uronate isomerase from Streptococcus equi subsp. equi (strain 4047).